The chain runs to 214 residues: Adenylate kinase (214 aa).

10–15 (GAGKGT) provides a ligand contact to ATP. The tract at residues 30–59 (STGDMLRAAIKAGTELGKQAKAVIDAGQLV) is NMP. Residues Thr-31, Arg-36, 57 to 59 (QLV), 85 to 88 (GFPR), and Gln-92 contribute to the AMP site. Residues 122–159 (GRRAHLPSGRTYHVVYNPPKVEGKDDVTGEDLVVRDDD) form an LID region. ATP-binding positions include Arg-123 and 132–133 (TY). Positions 156 and 167 each coordinate AMP. Lys-200 lines the ATP pocket.

The protein belongs to the adenylate kinase family. As to quaternary structure, monomer.

The protein localises to the cytoplasm. The catalysed reaction is AMP + ATP = 2 ADP. It functions in the pathway purine metabolism; AMP biosynthesis via salvage pathway; AMP from ADP: step 1/1. In terms of biological role, catalyzes the reversible transfer of the terminal phosphate group between ATP and AMP. Plays an important role in cellular energy homeostasis and in adenine nucleotide metabolism. This is Adenylate kinase from Vibrio vulnificus (strain CMCP6).